A 319-amino-acid polypeptide reads, in one-letter code: Sphingomyelinase D (319 aa).

A signal peptide spans 1–23 (MTPLLRTICAILCILIAVPLTFA). His-44 is a catalytic residue. Residues Glu-64, Asp-66, and Asp-109 each contribute to the Mg(2+) site. The SMD-tail signature appears at 312–319 (ATGADKPW).

This sequence belongs to the sphingomyelinase D/phospholipase D family. Mg(2+) is required as a cofactor.

It localises to the secreted. The catalysed reaction is a sphingomyelin + H2O = an N-acylsphing-4-enine 1-phosphate + choline + H(+). Its function is as follows. Catalyzes the hydrolysis of sphingomyelin. Sphingomyelinases D are produced by some spider in their venoms, but also by arthropods such as ticks, or pathogenic bacteria and fungi. They might play a role in pathogenicity through different mechanisms, such as membrane destabilization and host cell penetration, but also pulmonary inflammation and cutaneous lesions. In Ajellomyces capsulatus (strain G186AR / H82 / ATCC MYA-2454 / RMSCC 2432) (Darling's disease fungus), this protein is Sphingomyelinase D.